The sequence spans 615 residues: Putative binding protein BruAb2_0648 (615 aa).

Positions Met1–Ala29 are cleaved as a signal peptide.

The protein belongs to the bacterial solute-binding protein 5 family.

Its subcellular location is the periplasm. This Brucella abortus biovar 1 (strain 9-941) protein is Putative binding protein BruAb2_0648.